A 346-amino-acid chain; its full sequence is Dehydrogenase azaJ (346 aa).

43–48 (VDYATQ) is a binding site for NADP(+). 133–140 (LAFSTAIV) contributes to the substrate binding site. NADP(+)-binding positions include 170–173 (ATSV), 193–196 (SPHN), Tyr-211, and 251–252 (LN). 269–273 (APPNV) provides a ligand contact to substrate. Position 336 to 337 (336 to 337 (VS)) interacts with NADP(+).

It belongs to the zinc-containing alcohol dehydrogenase family.

It functions in the pathway secondary metabolite biosynthesis. In terms of biological role, dehydrogenase; part of the gene cluster that mediates the biosynthesis of azaphilones, a class of fungal metabolites characterized by a highly oxygenated pyrano-quinone bicyclic core and exhibiting a broad range of bioactivities. In the first step, the non-reducing polyketide synthase azaA forms the hexaketide precursor from successive condensations of five malonyl-CoA units, presumably with a simple acetyl-CoA starter unit. The reactive polyketide chain then undergoes a PT-mediated C2-C7 cyclization to afford the aromatic ring and is eventually released as an aldehyde through the R-domain. The putative ketoreductase azaE is proposed to catalyze the reduction of the terminal ketone resulting in the early culture product FK17-P2a. The monooxygenase azaH was demonstrated to be the only enzyme required to convert FK17-P2a to azanigerone E. AzaH first hydroxylates the benzaldehyde intermediate FK17-P2a at C4, which triggers the formation of the pyran-ring to afford azanigerone E. In parallel, the 2,4-dimethylhexanoyl chain is synthesized by the HR-PKS azaB and is proposed to be transferred to the C4-hydroxyl of azanigerone E by the acyltransferase azaD directly from the ACP domain of azaB. Alternatively, the 2,4-dimethyl-hexanoyl chain may be offloaded from the HR-PKS as a carboxylic acid and converted to an acyl-CoA by azaF. The resulting acyl-CoA molecule could then be taken up as a substrate by AzaD to form azanigerone B. To yield the carboxylic acid substituent in azanigerone A, the hydroxypropyl side chain of azanigerone B would need to undergo a C-C oxidative cleavage catalyzed by cytochrome P450 AzaI. AzaI is proposed to act on a vicinal diol that leads to a C-C bond scission either through an alkoxyradical intermediate or a peroxy complex. In the biosynthesis of azanigerone A, azanigerone B first undergoes hydroxylation at C10, possibly catalyzed by one of the two FAD-dependent monooxygenases encoded in the cluster, azaG or azaL, resulting in the vicinal diol azanigerone C. Oxidative cleavage of azanigerone C by azaI would yield the corresponding aldehyde derivative of azanigerone A. Finally, the dehydrogenase azaJ is proposed to convert the aldehyde functional group into the carboxylic acid, completing the conversion from azanigerone B to azanigerone A. Alternatively, the oxidation of aldehyde to carboxylic acid may be catalyzed by the same P450 enzyme azaI via consecutive oxidation or by endogenous alcohol dehydrogenase. This is Dehydrogenase azaJ from Aspergillus niger (strain ATCC 1015 / CBS 113.46 / FGSC A1144 / LSHB Ac4 / NCTC 3858a / NRRL 328 / USDA 3528.7).